The sequence spans 259 residues: Global transcriptional regulator CodY (259 aa).

The tract at residues 1–155 (MALLQKTRII…GATVVGMEIL (155 aa)) is GAF domain. Positions 203–222 (ASKIADRVGITRSVIVNALR) form a DNA-binding region, H-T-H motif. Position 215 is a phosphoserine (S215).

The protein belongs to the CodY family.

Its subcellular location is the cytoplasm. Its function is as follows. DNA-binding global transcriptional regulator which is involved in the adaptive response to starvation and acts by directly or indirectly controlling the expression of numerous genes in response to nutrient availability. During rapid exponential growth, CodY is highly active and represses genes whose products allow adaptation to nutrient depletion. The chain is Global transcriptional regulator CodY from Bacillus velezensis (strain DSM 23117 / BGSC 10A6 / LMG 26770 / FZB42) (Bacillus amyloliquefaciens subsp. plantarum).